The sequence spans 193 residues: Epididymal-specific lipocalin-12 (193 aa).

A signal peptide spans 1–19 (MGPWWALWLILTLPQILES). Cys-88 and Cys-193 are joined by a disulfide. N-linked (GlcNAc...) asparagine glycosylation is found at Asn-143 and Asn-172.

It belongs to the calycin superfamily. Lipocalin family. In terms of assembly, monomer. Expressed in epididymis.

The protein resides in the secreted. Binds all-trans retinoic acid and may act as a retinoid carrier protein within the epididymis. May play a role in male fertility. In Mus musculus (Mouse), this protein is Epididymal-specific lipocalin-12 (Lcn12).